The chain runs to 578 residues: Arginine--tRNA ligase (578 aa).

A 'HIGH' region motif is present at residues Pro-127–His-137.

Belongs to the class-I aminoacyl-tRNA synthetase family. As to quaternary structure, monomer.

It localises to the cytoplasm. It catalyses the reaction tRNA(Arg) + L-arginine + ATP = L-arginyl-tRNA(Arg) + AMP + diphosphate. This Pseudomonas fluorescens (strain SBW25) protein is Arginine--tRNA ligase.